Reading from the N-terminus, the 322-residue chain is Transaldolase (322 aa).

Residue K136 is the Schiff-base intermediate with substrate of the active site.

The protein belongs to the transaldolase family. Type 1 subfamily. As to quaternary structure, homodimer.

Its subcellular location is the cytoplasm. It carries out the reaction D-sedoheptulose 7-phosphate + D-glyceraldehyde 3-phosphate = D-erythrose 4-phosphate + beta-D-fructose 6-phosphate. It functions in the pathway carbohydrate degradation; pentose phosphate pathway; D-glyceraldehyde 3-phosphate and beta-D-fructose 6-phosphate from D-ribose 5-phosphate and D-xylulose 5-phosphate (non-oxidative stage): step 2/3. Its function is as follows. Transaldolase is important for the balance of metabolites in the pentose-phosphate pathway. This Xanthomonas campestris pv. campestris (strain B100) protein is Transaldolase.